The sequence spans 86 residues: Small ribosomal subunit protein uS15 (86 aa).

A disordered region spans residues 1-22 (MSVDTQKVIEDNKRSAQDTGSP). Residues 7–16 (KVIEDNKRSA) show a composition bias toward basic and acidic residues.

This sequence belongs to the universal ribosomal protein uS15 family. As to quaternary structure, part of the 30S ribosomal subunit. Forms a bridge to the 50S subunit in the 70S ribosome, contacting the 23S rRNA.

Its function is as follows. One of the primary rRNA binding proteins, it binds directly to 16S rRNA where it helps nucleate assembly of the platform of the 30S subunit by binding and bridging several RNA helices of the 16S rRNA. In terms of biological role, forms an intersubunit bridge (bridge B4) with the 23S rRNA of the 50S subunit in the ribosome. The protein is Small ribosomal subunit protein uS15 of Xanthomonas axonopodis pv. citri (strain 306).